Reading from the N-terminus, the 177-residue chain is Large ribosomal subunit protein uL6 (177 aa).

This sequence belongs to the universal ribosomal protein uL6 family. Part of the 50S ribosomal subunit.

Its function is as follows. This protein binds to the 23S rRNA, and is important in its secondary structure. It is located near the subunit interface in the base of the L7/L12 stalk, and near the tRNA binding site of the peptidyltransferase center. The polypeptide is Large ribosomal subunit protein uL6 (Shewanella denitrificans (strain OS217 / ATCC BAA-1090 / DSM 15013)).